We begin with the raw amino-acid sequence, 189 residues long: HGPRTase-like protein 2 (189 aa).

Belongs to the purine/pyrimidine phosphoribosyltransferase family. Archaeal HPRT subfamily.

In terms of biological role, may catalyze a purine salvage reaction, the substrate is unknown. This Halalkalicoccus jeotgali (strain DSM 18796 / CECT 7217 / JCM 14584 / KCTC 4019 / B3) protein is HGPRTase-like protein 2.